The sequence spans 266 residues: MDFVAKNLTKLRETNPLVQNITNYVVMNSTANSLLALGASPVMAHAMDELEEMVSIASALVVNIGTLDEYWIPSMEKAAKIASDLKKPIVLDPVGAGATKLRTKTALKILDFADISVLRGNFGEIAAVLGEHGKTRGVDSAAYDSNEAIELSKNAAKEFNTVSAVTGPVDHVSNGKEIYSISNGHSMLSKVTGTGCATTSIIGAFSAVDDPLKAAVSGLVVYGISAEMAFTEAPYPGTFQAKVYDWLYRIDEKLVLEKAKVNKFEI.

A substrate-binding site is contributed by Met-43. The ATP site is built by Arg-119 and Thr-166. Gly-193 provides a ligand contact to substrate.

It belongs to the Thz kinase family. Mg(2+) serves as cofactor.

It catalyses the reaction 5-(2-hydroxyethyl)-4-methylthiazole + ATP = 4-methyl-5-(2-phosphooxyethyl)-thiazole + ADP + H(+). The protein operates within cofactor biosynthesis; thiamine diphosphate biosynthesis; 4-methyl-5-(2-phosphoethyl)-thiazole from 5-(2-hydroxyethyl)-4-methylthiazole: step 1/1. In terms of biological role, catalyzes the phosphorylation of the hydroxyl group of 4-methyl-5-beta-hydroxyethylthiazole (THZ). The chain is Hydroxyethylthiazole kinase from Methanococcus maripaludis (strain DSM 14266 / JCM 13030 / NBRC 101832 / S2 / LL).